Here is a 132-residue protein sequence, read N- to C-terminus: Small ribosomal subunit protein uS8 (132 aa).

It belongs to the universal ribosomal protein uS8 family. In terms of assembly, part of the 30S ribosomal subunit. Contacts proteins S5 and S12.

In terms of biological role, one of the primary rRNA binding proteins, it binds directly to 16S rRNA central domain where it helps coordinate assembly of the platform of the 30S subunit. This is Small ribosomal subunit protein uS8 from Psychrobacter sp. (strain PRwf-1).